Consider the following 139-residue polypeptide: Transcription antitermination protein NusB (139 aa).

The protein belongs to the NusB family.

In terms of biological role, involved in transcription antitermination. Required for transcription of ribosomal RNA (rRNA) genes. Binds specifically to the boxA antiterminator sequence of the ribosomal RNA (rrn) operons. The sequence is that of Transcription antitermination protein NusB from Limosilactobacillus fermentum (strain NBRC 3956 / LMG 18251) (Lactobacillus fermentum).